The chain runs to 271 residues: 4-diphosphocytidyl-2-C-methyl-D-erythritol kinase (271 aa).

The active site involves Lys-8. 90–100 contacts ATP; sequence PFGAGLGGGSA. The active site involves Asp-132.

This sequence belongs to the GHMP kinase family. IspE subfamily.

The enzyme catalyses 4-CDP-2-C-methyl-D-erythritol + ATP = 4-CDP-2-C-methyl-D-erythritol 2-phosphate + ADP + H(+). It functions in the pathway isoprenoid biosynthesis; isopentenyl diphosphate biosynthesis via DXP pathway; isopentenyl diphosphate from 1-deoxy-D-xylulose 5-phosphate: step 3/6. Its function is as follows. Catalyzes the phosphorylation of the position 2 hydroxy group of 4-diphosphocytidyl-2C-methyl-D-erythritol. The chain is 4-diphosphocytidyl-2-C-methyl-D-erythritol kinase from Parabacteroides distasonis (strain ATCC 8503 / DSM 20701 / CIP 104284 / JCM 5825 / NCTC 11152).